Reading from the N-terminus, the 273-residue chain is Bifunctional protein FolD (273 aa).

NADP(+) contacts are provided by residues 149 to 151 (GLG) and Val215.

The protein belongs to the tetrahydrofolate dehydrogenase/cyclohydrolase family. As to quaternary structure, homodimer.

The enzyme catalyses (6R)-5,10-methylene-5,6,7,8-tetrahydrofolate + NADP(+) = (6R)-5,10-methenyltetrahydrofolate + NADPH. It carries out the reaction (6R)-5,10-methenyltetrahydrofolate + H2O = (6R)-10-formyltetrahydrofolate + H(+). The protein operates within one-carbon metabolism; tetrahydrofolate interconversion. Functionally, catalyzes the oxidation of 5,10-methylenetetrahydrofolate to 5,10-methenyltetrahydrofolate and then the hydrolysis of 5,10-methenyltetrahydrofolate to 10-formyltetrahydrofolate. The chain is Bifunctional protein FolD from Mycoplasma genitalium (strain ATCC 33530 / DSM 19775 / NCTC 10195 / G37) (Mycoplasmoides genitalium).